A 567-amino-acid polypeptide reads, in one-letter code: Urease subunit alpha (567 aa).

The Urease domain occupies 129 to 567; it reads GGIDAHIHFI…LPLAQRYFLF (439 aa). The Ni(2+) site is built by His-134, His-136, and Lys-217. N6-carboxylysine is present on Lys-217. His-219 contributes to the substrate binding site. Positions 246 and 272 each coordinate Ni(2+). Residue His-320 is the Proton donor of the active site. Residue Asp-360 coordinates Ni(2+).

Belongs to the metallo-dependent hydrolases superfamily. Urease alpha subunit family. In terms of assembly, heterotrimer of UreA (gamma), UreB (beta) and UreC (alpha) subunits. Three heterotrimers associate to form the active enzyme. Ni cation is required as a cofactor. Carboxylation allows a single lysine to coordinate two nickel ions.

It localises to the cytoplasm. The enzyme catalyses urea + 2 H2O + H(+) = hydrogencarbonate + 2 NH4(+). Its pathway is nitrogen metabolism; urea degradation; CO(2) and NH(3) from urea (urease route): step 1/1. The chain is Urease subunit alpha from Hahella chejuensis (strain KCTC 2396).